We begin with the raw amino-acid sequence, 222 residues long: Ribose-5-phosphate isomerase A (222 aa).

Residues 29 to 32, 82 to 85, and 95 to 98 contribute to the substrate site; these read TGST, DSAD, and KGGG. Glu-104 (proton acceptor) is an active-site residue. Lys-122 contacts substrate.

This sequence belongs to the ribose 5-phosphate isomerase family. As to quaternary structure, homodimer.

The enzyme catalyses aldehydo-D-ribose 5-phosphate = D-ribulose 5-phosphate. It participates in carbohydrate degradation; pentose phosphate pathway; D-ribose 5-phosphate from D-ribulose 5-phosphate (non-oxidative stage): step 1/1. Functionally, catalyzes the reversible conversion of ribose-5-phosphate to ribulose 5-phosphate. The chain is Ribose-5-phosphate isomerase A from Blochmanniella floridana.